Consider the following 600-residue polypeptide: Glutamine--fructose-6-phosphate aminotransferase [isomerizing] (600 aa).

Residue Cys-2 is the Nucleophile; for GATase activity of the active site. The 216-residue stretch at 2–217 folds into the Glutamine amidotransferase type-2 domain; it reads CGIVGYIGTE…DEEIVIVTKD (216 aa). 2 SIS domains span residues 283 to 422 and 452 to 590; these read IRQA…AKGI and IARD…VDKP. The active-site For Fru-6P isomerization activity is the Lys-595.

In terms of assembly, homodimer.

The protein localises to the cytoplasm. The enzyme catalyses D-fructose 6-phosphate + L-glutamine = D-glucosamine 6-phosphate + L-glutamate. Its function is as follows. Catalyzes the first step in hexosamine metabolism, converting fructose-6P into glucosamine-6P using glutamine as a nitrogen source. The protein is Glutamine--fructose-6-phosphate aminotransferase [isomerizing] of Halalkalibacterium halodurans (strain ATCC BAA-125 / DSM 18197 / FERM 7344 / JCM 9153 / C-125) (Bacillus halodurans).